Here is a 148-residue protein sequence, read N- to C-terminus: MVXWTDXERAAITSLWGKIDVGEIGPQALARLLIVYPWTQRHFSTFGNLSTNAAILGNPKVAAHGKTVMGGLELAVKNMDNIKGAYANLSKMHSEKIHVDPDNFRLLAEITTICLAAKFGPSVFTPDFQEAWQKFENAVVSALGRQYH.

In terms of domain architecture, Globin spans 3–148; it reads XWTDXERAAI…VVSALGRQYH (146 aa). Heme b contacts are provided by histidine 64 and histidine 93.

This sequence belongs to the globin family. Heterotetramer of two alpha chains and two beta chains. Red blood cells.

Its function is as follows. Involved in oxygen transport from gills to the various peripheral tissues. This chain is Hemoglobin subunit beta (hbb), found in Decapterus maruadsi (Japanese scad).